The following is a 77-amino-acid chain: Secapin (77 aa).

A signal peptide spans 1 to 32; sequence MKNYSKNATHLITVLLFSFVVILLIIPSKCEA. The propeptide occupies 33–52; that stretch reads VSNDMQPLEARSADLIPEPR. A disulfide bridge links Cys-61 with Cys-72.

This sequence belongs to the secapin family. Expressed by the venom gland.

The protein localises to the secreted. Functionally, nontoxic peptide. This chain is Secapin, found in Vespa velutina nigrithorax (Hornet).